Consider the following 374-residue polypeptide: Deoxyguanosinetriphosphate triphosphohydrolase-like protein (374 aa).

The HD domain maps to 65–196 (RLTHSLEVAQ…ANLADEIAYN (132 aa)).

This sequence belongs to the dGTPase family. Type 2 subfamily.

The polypeptide is Deoxyguanosinetriphosphate triphosphohydrolase-like protein (dgt) (Nitrosomonas europaea (strain ATCC 19718 / CIP 103999 / KCTC 2705 / NBRC 14298)).